A 239-amino-acid chain; its full sequence is Ribose-5-phosphate isomerase A (239 aa).

Substrate-binding positions include 39–42 (SGST), 95–98 (DGAD), and 108–111 (KGGG). Residue Glu117 is the Proton acceptor of the active site. Lys135 is a binding site for substrate.

This sequence belongs to the ribose 5-phosphate isomerase family. In terms of assembly, homodimer.

The catalysed reaction is aldehydo-D-ribose 5-phosphate = D-ribulose 5-phosphate. It participates in carbohydrate degradation; pentose phosphate pathway; D-ribose 5-phosphate from D-ribulose 5-phosphate (non-oxidative stage): step 1/1. Catalyzes the reversible conversion of ribose-5-phosphate to ribulose 5-phosphate. The chain is Ribose-5-phosphate isomerase A from Chlamydia muridarum (strain MoPn / Nigg).